Here is a 367-residue protein sequence, read N- to C-terminus: tRNA/tmRNA (uracil-C(5))-methyltransferase (367 aa).

Residues glutamine 190, tyrosine 218, asparagine 223, glutamate 239, and aspartate 299 each contribute to the S-adenosyl-L-methionine site. Cysteine 324 acts as the Nucleophile in catalysis. The Proton acceptor role is filled by glutamate 358.

This sequence belongs to the class I-like SAM-binding methyltransferase superfamily. RNA M5U methyltransferase family. TrmA subfamily.

It catalyses the reaction uridine(54) in tRNA + S-adenosyl-L-methionine = 5-methyluridine(54) in tRNA + S-adenosyl-L-homocysteine + H(+). It carries out the reaction uridine(341) in tmRNA + S-adenosyl-L-methionine = 5-methyluridine(341) in tmRNA + S-adenosyl-L-homocysteine + H(+). In terms of biological role, dual-specificity methyltransferase that catalyzes the formation of 5-methyluridine at position 54 (m5U54) in all tRNAs, and that of position 341 (m5U341) in tmRNA (transfer-mRNA). In Pectobacterium atrosepticum (strain SCRI 1043 / ATCC BAA-672) (Erwinia carotovora subsp. atroseptica), this protein is tRNA/tmRNA (uracil-C(5))-methyltransferase.